The following is an 806-amino-acid chain: Volume-regulated anion channel subunit LRRC8E (806 aa).

Residues 1 to 22 (MIPVAEFKQFTEQQPAFKVLKP) are Cytoplasmic-facing. A helical membrane pass occupies residues 23–43 (WWDVLAEYITYAMLMIGVFGC). The Extracellular portion of the chain corresponds to 44–130 (TLQVTQDKII…YETALHWYAK (87 aa)). A disulfide bridge links Cys-54 with Cys-311. N-linked (GlcNAc...) asparagine glycosylation is found at Asn-57 and Asn-80. Positions 72–81 (YDQQSPPSND) are enriched in polar residues. The tract at residues 72–103 (YDQQSPPSNDSDLETTIPPPTATSSPPREMSG) is disordered. Residues 131-151 (YFPYLVVIHTLIFIICGNFWF) form a helical membrane-spanning segment. Over 152–275 (KFPGTSSKIE…MRQTVLKVCK (124 aa)) the chain is Cytoplasmic. The disordered stretch occupies residues 182–213 (EVSGESSQEKPSQERSIDRELSKPNFEEGSPA). Over residues 188-207 (SQEKPSQERSIDRELSKPNF) the composition is skewed to basic and acidic residues. A helical membrane pass occupies residues 276-296 (FVLITIYNAVLVGKIHFIVPC). The Extracellular segment spans residues 297-323 (SVHTEDMTGYNSFCCNHTKAHLFSKLA). Asn-312 is a glycosylation site (N-linked (GlcNAc...) asparagine). A helical transmembrane segment spans residues 324 to 344 (ITYLCFLGVYGLTCLYTLYWL). Residues 345-806 (FRRPLKEYSF…VEVRDKLKED (462 aa)) lie on the Cytoplasmic side of the membrane. 10 LRR repeats span residues 544–566 (LKSL…VADV), 569–589 (HLQK…NALK), 593–614 (LVKE…VFSL), 616–637 (NLQV…ISLQ), 641–662 (KLSV…IRKL), 664–685 (GLEE…LFLC), 687–708 (KLRH…IGVL), 710–731 (LLQY…LFFC), 733–754 (KLKT…VGSL), and 756–777 (CLVK…LGNC).

This sequence belongs to the LRRC8 family. Heterohexamer; oligomerizes with other LRRC8 proteins (lrrc8a, lrrc8c, lrrc8d and/or lrrc8b) to form a heterohexamer. Detected in a channel complex that contains lrrc8a, lrrc8c and lrrc8e. In vivo, the subunit composition may depend primarily on expression levels, and heterooligomeric channels containing various proportions of the different LRRC8 proteins may coexist.

It is found in the cell membrane. The protein resides in the endoplasmic reticulum membrane. It localises to the lysosome membrane. The enzyme catalyses chloride(in) = chloride(out). It carries out the reaction iodide(out) = iodide(in). It catalyses the reaction taurine(out) = taurine(in). The catalysed reaction is 2',3'-cGAMP(out) = 2',3'-cGAMP(in). In terms of biological role, non-essential component of the volume-regulated anion channel (VRAC, also named VSOAC channel), an anion channel required to maintain a constant cell volume in response to extracellular or intracellular osmotic changes. The VRAC channel conducts iodide better than chloride and can also conduct organic osmolytes like taurine. Mediates efflux of amino acids, such as aspartate, in response to osmotic stress. The VRAC channel also mediates transport of immunoreactive cyclic dinucleotide GMP-AMP (2'-3'-cGAMP), an immune messenger produced in response to DNA virus in the cytosol. Channel activity requires lrrc8a plus at least one other family member (lrrc8b, lrrc8c, lrrc8d or lrrc8e); channel characteristics depend on the precise subunit composition. Also plays a role in lysosome homeostasis by forming functional lysosomal VRAC channels in response to low cytoplasmic ionic strength condition: lysosomal VRAC channels are necessary for the formation of large lysosome-derived vacuoles, which store and then expel excess water to maintain cytosolic water homeostasis. The polypeptide is Volume-regulated anion channel subunit LRRC8E (Xenopus tropicalis (Western clawed frog)).